Reading from the N-terminus, the 607-residue chain is Chaperone protein DnaK (607 aa).

Thr173 is subject to Phosphothreonine; by autocatalysis. Composition is skewed to basic and acidic residues over residues 490–509 (EQNA…RNEA) and 524–542 (GDNV…KEAL). Disordered regions lie at residues 490 to 510 (EQNA…NEAD), 524 to 555 (GDNV…EDIK), and 574 to 607 (QQAQ…KDNK). Positions 574–587 (QQAQQGDAAGSNQS) are enriched in polar residues. Residues 595 to 607 (TEVKDDDDKKDNK) show a composition bias toward basic and acidic residues.

The protein belongs to the heat shock protein 70 family.

Functionally, acts as a chaperone. This is Chaperone protein DnaK from Staphylococcus carnosus (strain TM300).